The chain runs to 1198 residues: Fibronectin type-III domain-containing protein 3A (1198 aa).

The tract at residues 160-221 is disordered; the sequence is YGDVDAHSTH…PSPINEHNGL (62 aa). Basic and acidic residues predominate over residues 163-201; sequence VDAHSTHGRSNFRDERSSKTYERLQKKLKDRQGTQKDKM. Over residues 202–214 the composition is skewed to low complexity; sequence SSPPSSPQKCPSP. 3 positions are modified to phosphoserine: S203, S207, and S213. Fibronectin type-III domains follow at residues 268 to 369, 373 to 465, 469 to 562, 566 to 660, 664 to 757, 761 to 851, 861 to 950, 951 to 1045, and 1046 to 1151; these read NIVK…TLSC, IPNP…TSGC, MPAS…TCPD, IPVK…TPAV, PCLP…TAPG, QCKP…TPPS, EISD…TKPL, PPDP…TPKS, and VPAA…TEPP. K384 is modified (N6-acetyllysine). A helical transmembrane segment spans residues 1177-1197; that stretch reads ILVLFAFFSILIAFIIQYFVI.

This sequence belongs to the FNDC3 family. Expressed in the odontoblast and nerves in the dental pulp. Also expressed in trachea and to a lesser extent in the brain, liver, lung and kidney.

It is found in the golgi apparatus membrane. In terms of biological role, mediates spermatid-Sertoli adhesion during spermatogenesis. The sequence is that of Fibronectin type-III domain-containing protein 3A (FNDC3A) from Homo sapiens (Human).